The sequence spans 89 residues: MFGLSPAQLIILLVVILLIFGTKKLRNAGSDLGAAVKGFKKAMKEDEKVKDAEFKSIDNETASAKKGKYKRERNRLNPCLILVFQNLFY.

The chain crosses the membrane as a helical span at residues 1 to 21; that stretch reads MFGLSPAQLIILLVVILLIFG.

Belongs to the TatA/E family. As to quaternary structure, the Tat system comprises two distinct complexes: a TatABC complex, containing multiple copies of TatA, TatB and TatC subunits, and a separate TatA complex, containing only TatA subunits. Substrates initially bind to the TatABC complex, which probably triggers association of the separate TatA complex to form the active translocon.

The protein resides in the cell inner membrane. Functionally, part of the twin-arginine translocation (Tat) system that transports large folded proteins containing a characteristic twin-arginine motif in their signal peptide across membranes. TatA could form the protein-conducting channel of the Tat system. The chain is Sec-independent protein translocase protein TatA from Haemophilus influenzae (strain ATCC 51907 / DSM 11121 / KW20 / Rd).